The chain runs to 596 residues: Elongation factor 4 (596 aa).

Residues 2 to 184 (KHIRNFSIIA…EIIAKIPPPV (183 aa)) enclose the tr-type G domain. GTP is bound by residues 14-19 (DHGKST) and 131-134 (NKID).

It belongs to the TRAFAC class translation factor GTPase superfamily. Classic translation factor GTPase family. LepA subfamily.

It is found in the cell inner membrane. It catalyses the reaction GTP + H2O = GDP + phosphate + H(+). Required for accurate and efficient protein synthesis under certain stress conditions. May act as a fidelity factor of the translation reaction, by catalyzing a one-codon backward translocation of tRNAs on improperly translocated ribosomes. Back-translocation proceeds from a post-translocation (POST) complex to a pre-translocation (PRE) complex, thus giving elongation factor G a second chance to translocate the tRNAs correctly. Binds to ribosomes in a GTP-dependent manner. In Shewanella frigidimarina (strain NCIMB 400), this protein is Elongation factor 4.